Reading from the N-terminus, the 1409-residue chain is Tensin-2 (1409 aa).

The tract at residues 1 to 35 (MKSSGPVERLLRALGRRDSSRAASRPRKAEPHSFR) is disordered. A compositionally biased stretch (basic and acidic residues) spans 9–20 (RLLRALGRRDSS). The Phorbol-ester/DAG-type zinc-finger motif lies at 31–79 (PHSFREKVFRKKPPVCAVCKVTIDGTGVSCRVCKVATHRKCEAKVTSAC). Phosphothreonine is present on threonine 91. 2 positions are modified to phosphoserine: serine 118 and serine 120. The Phosphatase tensin-type domain occupies 122–294 (DPLMERRWDL…SYFSGLLSGS (173 aa)). Catalysis depends on cysteine 231, which acts as the Phosphocysteine intermediate. In terms of domain architecture, C2 tensin-type spans 299-425 (SSPLFLHYVL…ASVEFVFSSS (127 aa)). The residue at position 455 (serine 455) is a Phosphoserine. Phosphotyrosine is present on tyrosine 456. The tract at residues 462-536 (HHEDSVDGSL…SPGRPPPTAA (75 aa)) is disordered. Serine 466 bears the Phosphoserine mark. A Phosphothreonine modification is found at threonine 474. Position 481 is a phosphoserine (serine 481). Tyrosine 483 is modified (phosphotyrosine). A compositionally biased stretch (pro residues) spans 491–506 (RQTPPAPSPEPPPPPM). The residue at position 555 (arginine 555) is an Omega-N-methylarginine. 3 disordered regions span residues 562-582 (AILD…GVYP), 812-1098 (PGEG…SSPA), and 1111-1130 (LSDN…QSNV). Phosphoserine occurs at positions 820, 825, 830, 832, 835, and 845. 2 stretches are compositionally biased toward polar residues: residues 900-918 (SASS…SSPV) and 930-940 (RSPTSAPTQRL). Threonine 910 is modified (phosphothreonine). Phosphoserine is present on residues serine 931, serine 941, and serine 972. A compositionally biased stretch (pro residues) spans 968–982 (PLAPSPVSPTFPPSS). Threonine 977 is modified (phosphothreonine). Phosphoserine occurs at positions 991 and 1003. Residues 1046-1056 (PEPPQSSPTPA) show a composition bias toward pro residues. The SH2 domain maps to 1140–1247 (WYKPHLSRDQ…SLPCCLRIPS (108 aa)). Threonine 1182 bears the Phosphothreonine mark. Serine 1247 is subject to Phosphoserine. One can recognise a PTB domain in the interval 1275–1408 (ACSVLYLTSV…FITKVLLGQR (134 aa)).

The protein belongs to the PTEN phosphatase protein family. In terms of assembly, interacts with AXL. Interacts with SYK; leading to its phosphorylation. Interacts with SQSTM1 (via PB1 domain); the interaction leads to sequestration of TNS2 in cytoplasmic aggregates with SQSTM1 and promotes TNS2 ubiquitination and proteasomal degradation. Post-translationally, ubiquitinated following sequestration in cytoplasmic aggregates with SQSTM1, leading to proteasomal degradation. In terms of tissue distribution, detected in heart, kidney, brain, thymus, spleen, liver, placenta, lung, skeletal muscle and small intestine.

It localises to the cell junction. The protein localises to the focal adhesion. Its subcellular location is the cell membrane. The protein resides in the cytoplasm. The enzyme catalyses O-phospho-L-tyrosyl-[protein] + H2O = L-tyrosyl-[protein] + phosphate. Functionally, tyrosine-protein phosphatase which regulates cell motility, proliferation and muscle-response to insulin. Phosphatase activity is mediated by binding to phosphatidylinositol-3,4,5-triphosphate (PtdIns(3,4,5)P3) via the SH2 domain. In muscles and under catabolic conditions, dephosphorylates IRS1 leading to its degradation and muscle atrophy. Negatively regulates PI3K-AKT pathway activation. Dephosphorylates nephrin NPHS1 in podocytes which regulates activity of the mTORC1 complex. Under normal glucose conditions, NPHS1 outcompetes IRS1 for binding to phosphatidylinositol 3-kinase (PI3K) which balances mTORC1 activity but high glucose conditions lead to up-regulation of TNS2, increased NPHS1 dephosphorylation and activation of mTORC1, contributing to podocyte hypertrophy and proteinuria. Required for correct podocyte morphology, podocyte-glomerular basement membrane interaction and integrity of the glomerular filtration barrier. Enhances RHOA activation in the presence of DLC1. Plays a role in promoting DLC1-dependent remodeling of the extracellular matrix. This Homo sapiens (Human) protein is Tensin-2 (TNS2).